A 365-amino-acid polypeptide reads, in one-letter code: Alanine racemase (365 aa).

Catalysis depends on Lys32, which acts as the Proton acceptor; specific for D-alanine. Lys32 carries the N6-(pyridoxal phosphate)lysine modification. Arg128 is a binding site for substrate. Residue Tyr257 is the Proton acceptor; specific for L-alanine of the active site. Met305 serves as a coordination point for substrate.

It belongs to the alanine racemase family. Pyridoxal 5'-phosphate is required as a cofactor.

The catalysed reaction is L-alanine = D-alanine. The protein operates within amino-acid biosynthesis; D-alanine biosynthesis; D-alanine from L-alanine: step 1/1. Functionally, catalyzes the interconversion of L-alanine and D-alanine. May also act on other amino acids. In Francisella tularensis subsp. holarctica (strain FTNF002-00 / FTA), this protein is Alanine racemase (alr).